Here is a 130-residue protein sequence, read N- to C-terminus: MEDCIEWTGGVNSKGYGRKWVNGKLVTPHRHIYEETYGPVPTGIVVMHICDNPRCYNIKHLTLGTPKDNSEDMVTKGRQAKGEELSKKLTESDVLAIRSSTLSHRSLGELYGVSQSTITRILQRKTWRHI.

The protein is Protein 7.7 of Escherichia phage T7 (Bacteriophage T7).